A 351-amino-acid chain; its full sequence is Calcium release-activated calcium channel protein 1 (351 aa).

Positions 1 to 21 are enriched in polar residues; it reads MSVWTTANNSGLETPTKSPIT. Disordered stretches follow at residues 1–39 and 71–141; these read MSVW…TGNH and HAHP…EDLH. Over 1 to 163 the chain is Cytoplasmic; that stretch reads MSVWTTANNS…SRAKLKASSK (163 aa). 2 stretches are compositionally biased toward low complexity: residues 22 to 33 and 80 to 93; these read SSVPRAARSSAV and SNSP…SNNS. Over residues 94 to 106 the composition is skewed to polar residues; sequence AGFQRTSISNSLL. A helical transmembrane segment spans residues 164-181; it reads TSALLSGFAMVAMVEVQL. The Extracellular portion of the chain corresponds to 182–191; it reads DHDTNVPPGM. Residues 192-212 form a helical membrane-spanning segment; sequence LIAFAICTTLLVAVHMLALMI. Residues 213-248 lie on the Cytoplasmic side of the membrane; it reads STCILPNIETVCNLHSISLVHESPHERLHWYIETAW. The helical transmembrane segment at 249–269 threads the bilayer; sequence AFSTLLGLILFLLEIAILCWV. Over 270-277 the chain is Extracellular; sequence KFYDLSPP. Residues 278 to 298 traverse the membrane as a helical segment; that stretch reads AAWSACVVLIPVMIIFMAFAI. Residues 299-351 are Cytoplasmic-facing; the sequence is HFYRSLVSHKYEVTVSGIRELEMLKEQMEQDHLEHHNNIRNNGMNYGASGDIV.

This sequence belongs to the Orai family. As to quaternary structure, hexamer.

Its subcellular location is the cell membrane. The catalysed reaction is Ca(2+)(in) = Ca(2+)(out). Functionally, pore-forming subunit of inward rectifying Ca(2+) release-activated Ca(2+) (CRAC) channels. Assembles in hexameric CRAC channels that mediate Ca(2+) influx upon depletion of endoplasmic reticulum Ca(2+) store and channel activation by Ca(2+) sensor Stim, a process known as store-operated Ca(2+) entry (SOCE). Regulates transcription factor NFAT nuclear import. The sequence is that of Calcium release-activated calcium channel protein 1 from Drosophila melanogaster (Fruit fly).